A 520-amino-acid chain; its full sequence is Laccase-1 (520 aa).

An N-terminal signal peptide occupies residues 1–19 (MRLSNALVLVAACISSVVA). Plastocyanin-like domains follow at residues 21 to 145 (TRTF…FIVY), 157 to 305 (VDDE…LTLA), and 375 to 488 (TVPV…FAEA). Residues H82 and H84 each coordinate Cu cation. Cystine bridges form between C103–C509 and C135–C229. Residue N108 is glycosylated (N-linked (GlcNAc...) asparagine). Residues H127 and H129 each coordinate Cu cation. N-linked (GlcNAc...) asparagine glycans are attached at residues N239 and N299. Positions 417, 420, 422, 470, 471, 472, and 476 each coordinate Cu cation. N492 carries an N-linked (GlcNAc...) asparagine glycan.

The protein belongs to the multicopper oxidase family. Cu cation is required as a cofactor.

The protein localises to the secreted. It carries out the reaction 4 hydroquinone + O2 = 4 benzosemiquinone + 2 H2O. Lignin degradation and detoxification of lignin-derived products. This is Laccase-1 (lcc1) from Agaricus bisporus (White button mushroom).